A 1275-amino-acid polypeptide reads, in one-letter code: Rho1 guanine nucleotide exchange factor 3 (1275 aa).

4 disordered regions span residues 1–42, 56–113, 131–188, and 214–248; these read MKLS…SFQK, SPPF…NSAA, NNPL…SPYS, and LSPT…VEYL. The segment covering 7–17 has biased composition (basic and acidic residues); the sequence is LFHRSSKDHGG. Polar residues-rich tracts occupy residues 32 to 42, 80 to 113, and 142 to 151; these read PHSSSPPSFQK, ASIN…NSAA, and SPGNKQNTVD. Composition is skewed to low complexity over residues 178–188 and 214–228; these read SSVSSHSSPYS and LSPT…SPIR. Position 293 is a phosphoserine (serine 293). Positions 465-657 constitute a DH domain; it reads ARQNNIHELI…RATCEECDAV (193 aa). Residues 692–855 enclose the PH domain; the sequence is EFFFEGIVQR…WVEKINVAKK (164 aa). Positions 930-1239 constitute a CNH domain; the sequence is YGDISCIAQF…KYYPSNSDWL (310 aa).

Its subcellular location is the cytoplasm. Its function is as follows. Stimulates the exchange of Rho1 GDP-bound form into GTP-bound form. Regulates, via interaction and activation of Rho1, beta-1,3-glucan biosynthesis and cell wall integrity during septation. Involved in the regulation of contractile ring assembly. The chain is Rho1 guanine nucleotide exchange factor 3 (rgf3) from Schizosaccharomyces pombe (strain 972 / ATCC 24843) (Fission yeast).